Here is a 561-residue protein sequence, read N- to C-terminus: Urocanate hydratase (561 aa).

NAD(+) is bound by residues glycine 52 to glycine 53, glutamine 130, glycine 176 to glycine 178, glutamate 196, arginine 201, asparagine 242 to alanine 243, glutamine 263 to histidine 267, tyrosine 273 to leucine 274, and tyrosine 322. Cysteine 410 is an active-site residue. Glycine 492 lines the NAD(+) pocket.

It belongs to the urocanase family. It depends on NAD(+) as a cofactor.

The protein resides in the cytoplasm. It carries out the reaction 4-imidazolone-5-propanoate = trans-urocanate + H2O. It participates in amino-acid degradation; L-histidine degradation into L-glutamate; N-formimidoyl-L-glutamate from L-histidine: step 2/3. Functionally, catalyzes the conversion of urocanate to 4-imidazolone-5-propionate. This Salmonella arizonae (strain ATCC BAA-731 / CDC346-86 / RSK2980) protein is Urocanate hydratase.